A 515-amino-acid chain; its full sequence is GMP synthase [glutamine-hydrolyzing] (515 aa).

The 191-residue stretch at 10-200 (TIIVLDFGSQ…VFGVCGCSEG (191 aa)) folds into the Glutamine amidotransferase type-1 domain. Cysteine 87 (nucleophile) is an active-site residue. Catalysis depends on residues histidine 174 and glutamate 176. Residues 201–390 (WNMENFIEVE…LGIPDEIVWR (190 aa)) form the GMPS ATP-PPase domain. An ATP-binding site is contributed by 228 to 234 (SGGVDSS).

As to quaternary structure, homodimer.

It carries out the reaction XMP + L-glutamine + ATP + H2O = GMP + L-glutamate + AMP + diphosphate + 2 H(+). It participates in purine metabolism; GMP biosynthesis; GMP from XMP (L-Gln route): step 1/1. Its function is as follows. Catalyzes the synthesis of GMP from XMP. The chain is GMP synthase [glutamine-hydrolyzing] from Bacillus cereus (strain ATCC 14579 / DSM 31 / CCUG 7414 / JCM 2152 / NBRC 15305 / NCIMB 9373 / NCTC 2599 / NRRL B-3711).